The chain runs to 174 residues: NAD(P)H-quinone oxidoreductase subunit J (174 aa).

This sequence belongs to the complex I 30 kDa subunit family. In terms of assembly, NDH-1 can be composed of about 15 different subunits; different subcomplexes with different compositions have been identified which probably have different functions.

It localises to the cellular thylakoid membrane. It carries out the reaction a plastoquinone + NADH + (n+1) H(+)(in) = a plastoquinol + NAD(+) + n H(+)(out). The catalysed reaction is a plastoquinone + NADPH + (n+1) H(+)(in) = a plastoquinol + NADP(+) + n H(+)(out). In terms of biological role, NDH-1 shuttles electrons from an unknown electron donor, via FMN and iron-sulfur (Fe-S) centers, to quinones in the respiratory and/or the photosynthetic chain. The immediate electron acceptor for the enzyme in this species is believed to be plastoquinone. Couples the redox reaction to proton translocation, and thus conserves the redox energy in a proton gradient. Cyanobacterial NDH-1 also plays a role in inorganic carbon-concentration. The polypeptide is NAD(P)H-quinone oxidoreductase subunit J (Picosynechococcus sp. (strain ATCC 27264 / PCC 7002 / PR-6) (Agmenellum quadruplicatum)).